The following is a 421-amino-acid chain: Membrane-associated protein UidC (421 aa).

A signal peptide spans 1–23; that stretch reads MRKIVAMAVICLTAASGLTSAYA.

This sequence belongs to the outer membrane porin (Opr) (TC 1.B.25) family.

It is found in the cell outer membrane. Enhances the activity of the UidB (GusB) glucuronide transporter, on its own however it has no transport activity. Glucuronide transport does not occur in strain K12 due to a variant at position 100 of the UidB (GusB, AC P0CE44, AC P0CE45) protein. This is Membrane-associated protein UidC (uidC) from Escherichia coli (strain K12).